Consider the following 523-residue polypeptide: Siroheme synthase (523 aa).

Residues 1 to 203 (MNTFPLFFKL…GNENEAIAQL (203 aa)) form a precorrin-2 dehydrogenase /sirohydrochlorin ferrochelatase region. NAD(+) contacts are provided by residues 22–23 (DV) and 43–44 (PS). Position 128 is a phosphoserine (Ser-128). A uroporphyrinogen-III C-methyltransferase region spans residues 231-523 (GEVYIVGAGP…DGGLEQLVID (293 aa)). Pro-240 provides a ligand contact to S-adenosyl-L-methionine. The active-site Proton acceptor is Asp-263. Lys-285 functions as the Proton donor in the catalytic mechanism. S-adenosyl-L-methionine contacts are provided by residues 316 to 318 (GGD), Ile-321, 346 to 347 (TA), Met-398, and Ala-427.

The protein in the N-terminal section; belongs to the precorrin-2 dehydrogenase / sirohydrochlorin ferrochelatase family. It in the C-terminal section; belongs to the precorrin methyltransferase family.

The catalysed reaction is uroporphyrinogen III + 2 S-adenosyl-L-methionine = precorrin-2 + 2 S-adenosyl-L-homocysteine + H(+). The enzyme catalyses precorrin-2 + NAD(+) = sirohydrochlorin + NADH + 2 H(+). It carries out the reaction siroheme + 2 H(+) = sirohydrochlorin + Fe(2+). Its pathway is cofactor biosynthesis; adenosylcobalamin biosynthesis; precorrin-2 from uroporphyrinogen III: step 1/1. The protein operates within cofactor biosynthesis; adenosylcobalamin biosynthesis; sirohydrochlorin from precorrin-2: step 1/1. It participates in porphyrin-containing compound metabolism; siroheme biosynthesis; precorrin-2 from uroporphyrinogen III: step 1/1. It functions in the pathway porphyrin-containing compound metabolism; siroheme biosynthesis; siroheme from sirohydrochlorin: step 1/1. Its pathway is porphyrin-containing compound metabolism; siroheme biosynthesis; sirohydrochlorin from precorrin-2: step 1/1. In terms of biological role, multifunctional enzyme that catalyzes the SAM-dependent methylations of uroporphyrinogen III at position C-2 and C-7 to form precorrin-2 via precorrin-1. Then it catalyzes the NAD-dependent ring dehydrogenation of precorrin-2 to yield sirohydrochlorin. Finally, it catalyzes the ferrochelation of sirohydrochlorin to yield siroheme. The sequence is that of Siroheme synthase from Psychrobacter cryohalolentis (strain ATCC BAA-1226 / DSM 17306 / VKM B-2378 / K5).